The following is a 350-amino-acid chain: Melatonin receptor type 1A-A (350 aa).

The Extracellular portion of the chain corresponds to 1–29 (MFMNGSSLNSSALDPSEQALQRPPWVTTT). Residues N4 and N9 are each glycosylated (N-linked (GlcNAc...) asparagine). The chain crosses the membrane as a helical span at residues 30-50 (LGCFLIFTIVVDILGNLLVIF). Residues 51 to 63 (SVYRNKKLQNAGN) lie on the Cytoplasmic side of the membrane. Residues 64–84 (IFVVSLAVADLVVAIYPYPLV) form a helical membrane-spanning segment. Topologically, residues 85–101 (LTSIFHRGWNLGYMHCQ) are extracellular. An intrachain disulfide couples C100 to C177. Residues 102–122 (ISGFLMGVSVIGSIFNITGIA) form a helical membrane-spanning segment. Topologically, residues 123 to 144 (INCYCYICHSLKYDKLYSDKNS) are cytoplasmic. The chain crosses the membrane as a helical span at residues 145-165 (VCYVLLIWALTVLAIVPNLFV). The Extracellular segment spans residues 166 to 187 (GSLQYDPRVYSCTFEQSASSAY). A helical membrane pass occupies residues 188-208 (TIAVVFFHFILPIMIVTYCYL). Over 209 to 240 (RIWVLVIQVRRRVKNDNRPKITPHDVRNFVTM) the chain is Cytoplasmic. The chain crosses the membrane as a helical span at residues 241 to 261 (FVVFVLFAVCWAPLNFIGLAV). Over 262–267 (AISPER) the chain is Extracellular. Residues 268 to 288 (VVPLIPEWLFVASYFMAYFNS) traverse the membrane as a helical segment. Topologically, residues 289–350 (CLNAIVYGVL…NNNQVKVDSV (62 aa)) are cytoplasmic.

Belongs to the G-protein coupled receptor 1 family.

The protein localises to the cell membrane. Its function is as follows. High affinity receptor for melatonin. The activity of this receptor is mediated by pertussis toxin sensitive G proteins that inhibits adenylate cyclase activity. In Danio rerio (Zebrafish), this protein is Melatonin receptor type 1A-A (mtnr1aa).